A 407-amino-acid chain; its full sequence is 4-hydroxybenzoate polyprenyltransferase, mitochondrial (407 aa).

Residues 1–20 (MAFFGLSRVSRRLLKSSVSV) constitute a mitochondrion transit peptide. 6 consecutive transmembrane segments (helical) span residues 137 to 157 (IGTW…ADPG), 162 to 182 (FKYM…GCTI), 210 to 230 (FQGI…LLQL), 254 to 274 (FTFW…LLGW), 279 to 299 (GSIA…WTLV), and 330 to 350 (LWLT…GFSA).

Belongs to the UbiA prenyltransferase family. The cofactor is Mg(2+). As to expression, expressed in flowers.

It localises to the mitochondrion inner membrane. It catalyses the reaction an all-trans-polyprenyl diphosphate + 4-hydroxybenzoate = a 4-hydroxy-3-(all-trans-polyprenyl)benzoate + diphosphate. It participates in cofactor biosynthesis; ubiquinone biosynthesis. Its function is as follows. Catalyzes the prenylation of para-hydroxybenzoate (PHB) with an all-trans polyprenyl group. Mediates the second step in the final reaction sequence of coenzyme Q (CoQ) biosynthesis, which is the condensation of the polyisoprenoid side chain with PHB, generating the first membrane-bound Q intermediate. Required for embryo development. The sequence is that of 4-hydroxybenzoate polyprenyltransferase, mitochondrial from Arabidopsis thaliana (Mouse-ear cress).